Consider the following 381-residue polypeptide: Chaperone protein DnaJ (381 aa).

In terms of domain architecture, J spans 3–66 (DYYETLGVER…DKRRMYDSGV (64 aa)). The CR-type zinc-finger motif lies at 129 to 211 (GGTAHVKINT…CMGHGRVRTT (83 aa)). Residues Cys142, Cys145, Cys159, Cys162, Cys185, Cys188, Cys199, and Cys202 each contribute to the Zn(2+) site. CXXCXGXG motif repeat units lie at residues 142–149 (CQECGGSG), 159–166 (CPDCHGQG), 185–192 (CERCEGHG), and 199–206 (CPSCMGHG). The disordered stretch occupies residues 355–381 (ATHVSQASRPQAGQKKGFFSKLKDALS). Residues 356–365 (THVSQASRPQ) show a composition bias toward polar residues.

It belongs to the DnaJ family. As to quaternary structure, homodimer. Zn(2+) serves as cofactor.

It localises to the cytoplasm. Its function is as follows. Participates actively in the response to hyperosmotic and heat shock by preventing the aggregation of stress-denatured proteins and by disaggregating proteins, also in an autonomous, DnaK-independent fashion. Unfolded proteins bind initially to DnaJ; upon interaction with the DnaJ-bound protein, DnaK hydrolyzes its bound ATP, resulting in the formation of a stable complex. GrpE releases ADP from DnaK; ATP binding to DnaK triggers the release of the substrate protein, thus completing the reaction cycle. Several rounds of ATP-dependent interactions between DnaJ, DnaK and GrpE are required for fully efficient folding. Also involved, together with DnaK and GrpE, in the DNA replication of plasmids through activation of initiation proteins. The protein is Chaperone protein DnaJ of Bifidobacterium longum (strain NCC 2705).